We begin with the raw amino-acid sequence, 108 residues long: UPF0235 protein MM_0822 (108 aa).

It belongs to the UPF0235 family.

This chain is UPF0235 protein MM_0822, found in Methanosarcina mazei (strain ATCC BAA-159 / DSM 3647 / Goe1 / Go1 / JCM 11833 / OCM 88) (Methanosarcina frisia).